The chain runs to 524 residues: MVPQVLLFAPLLVFPLCFGKFPIYTIPDKLGPWSPIDLHHLSCPNNLVVEDEGCTNLSGFSYMELKVGYISAIKVNGFTCTGVVTEAETYTNFVGYVTTTFKRKHFRPTPDACRAAYNWKMAGDPRYEESLHNPYPDYHWLRTVKTTKESLVIISPSVTDLDPYDKSLHSRVFPGGNCSGITVSSTYCSTNHDYTIWMPENLRLGTSCDIFTHSRGKRASKGDKTCGFVDERGLYKSLKGACKLKLCGVLGLRLMDGTWVAMQTSDETKWCPPGQLVNLHDFRSDEIEHLVEEELVKKREECLDALESIMTTKSVSFRRLSHLRKLVPGFGKAYTIFNKTLMEADAHYKSVQTWNEIIPSKGCLRVGERCHPHVNGVFFNGIILGSDGHVLIPEMQSSLLQQHMELLESSVIPLMHPLADPSTVFKDGDEVEDFVEVHLPDVHKQVSGVDLGLPKWGKYVLMIAGALIALMLIIFLMTCCRRVNRPESTQSNLGGTGRNVSVPSQSGKVISSWESYKSGGETRL.

The signal sequence occupies residues 1–19 (MVPQVLLFAPLLVFPLCFG). The Virion surface portion of the chain corresponds to 20 to 459 (KFPIYTIPDK…DLGLPKWGKY (440 aa)). 6 cysteine pairs are disulfide-bonded: Cys43-Cys302, Cys54-Cys226, Cys80-Cys113, Cys178-Cys188, Cys208-Cys247, and Cys242-Cys271. Asn56 is a glycosylation site (N-linked (GlcNAc...) asparagine; by host). Residue Asn177 is glycosylated (N-linked (GlcNAc...) asparagine; by host). A glycan (N-linked (GlcNAc...) asparagine; by host) is linked at Asn338. Cys363 and Cys370 are disulfide-bonded. A helical membrane pass occupies residues 460-480 (VLMIAGALIALMLIIFLMTCC). The S-palmitoyl cysteine; by host moiety is linked to residue Cys480. The Intravirion portion of the chain corresponds to 481–524 (RRVNRPESTQSNLGGTGRNVSVPSQSGKVISSWESYKSGGETRL). A disordered region spans residues 487–506 (ESTQSNLGGTGRNVSVPSQS).

The protein belongs to the lyssavirus glycoprotein family. In terms of assembly, homotrimer. Interacts with matrix protein. Interacts with host TRFC. Interacts with host BST2; this interaction inhibits viral budding by tethering new virions to the cell surface. Interacts with ITGB1. Interacts with host GRM2. Post-translationally, glycosylated and palmitoylated by host. Glycosylation is crucial for glycoprotein export at the cell surface.

The protein localises to the virion membrane. Its function is as follows. Attaches the virus to host cellular receptor, inducing endocytosis of the virion by using different host proteins including TFRC, GRM2 and ITGB1. In the endosome, the acidic pH induces conformational changes in the glycoprotein trimer, which trigger fusion between virus and cell membrane. There is convincing in vitro evidence that the muscular form of the nicotinic acetylcholine receptor (nAChR), the neuronal cell adhesion molecule (NCAM), and the p75 neurotrophin receptor (p75NTR) bind glycoprotein and thereby facilitate rabies virus entry into cells. In Homo sapiens (Human), this protein is Glycoprotein (G).